A 350-amino-acid chain; its full sequence is Ceramide synthase 1 (350 aa).

At Ala2 the chain carries N-acetylalanine. Transmembrane regions (helical) follow at residues 53 to 73 (AHLA…WTAL), 103 to 123 (AWKF…LFGT), 148 to 168 (IAAA…ATLY), 176 to 196 (SVVM…SYAF), 239 to 259 (AADL…LYWF), and 287 to 307 (LLLL…AFAA). The 215-residue stretch at 97–311 (AKMPESAWKF…IVAFAAKVLT (215 aa)) folds into the TLC domain.

Acetylated. Deacetylation by SIRT3 increases enzyme activity and promotes mitochondrial ceramide accumulation.

Its subcellular location is the endoplasmic reticulum membrane. The catalysed reaction is a sphingoid base + octadecanoyl-CoA = an N-octadecanoyl-sphingoid base + CoA + H(+). The enzyme catalyses sphinganine + octadecanoyl-CoA = N-(octadecanoyl)-sphinganine + CoA + H(+). It carries out the reaction hexadecasphinganine + octadecanoyl-CoA = N-octadecanoylhexadecasphinganine + CoA + H(+). It catalyses the reaction sphing-4-enine + octadecanoyl-CoA = N-octadecanoylsphing-4-enine + CoA + H(+). The catalysed reaction is heptadecasphing-4-enine + octadecanoyl-CoA = N-octadecanoyl-heptadecasphing-4-enine + CoA + H(+). The enzyme catalyses 2-hydroxyoctadecanoyl-CoA + sphinganine = N-(2-hydroxyoctadecanoyl)-sphinganine + CoA + H(+). It carries out the reaction eicosanoyl-CoA + sphinganine = N-eicosanoylsphinganine + CoA + H(+). It functions in the pathway lipid metabolism; sphingolipid metabolism. Its activity is regulated as follows. Inhibited by fumonisin B1. In terms of biological role, ceramide synthase that catalyzes the transfer of the acyl chain from acyl-CoA to a sphingoid base, with high selectivity toward stearoyl-CoA (octadecanoyl-CoA; C18:0-CoA). N-acylates sphinganine and sphingosine bases to form dihydroceramides and ceramides in de novo synthesis and salvage pathways, respectively. Plays a predominant role in skeletal muscle in regulating C18 ceramide and dihydroceramide levels with an impact on whole-body glucose metabolism and insulin sensitivity. Protects from diet-induced obesity by suppressing the uptake of glucose in multiple organs in a FGF21-dependent way. Generates C18 ceramides in the brain, playing a critical role in cerebellar development and Purkinje cell function. In response to cellular stress mediates mitophagy, a known defense mechanism against cell transformation and aging. Upon mitochondria fission, generates C18 ceramides that anchor lipidated MAP1LC3B/LC3B-II autophagolysosomes to outer mitochondrial membranes to eliminate damaged mitochondria. The protein is Ceramide synthase 1 of Homo sapiens (Human).